The following is a 198-amino-acid chain: tRNA(Phe) 7-((3-amino-3-carboxypropyl)-4-demethylwyosine(37)-N(4))-methyltransferase 1 (198 aa).

It belongs to the TYW3 family.

It catalyses the reaction 4-demethyl-7-[(3S)-3-amino-3-carboxypropyl]wyosine(37) in tRNA(Phe) + S-adenosyl-L-methionine = 7-[(3S)-3-amino-3-carboxypropyl]wyosine(37) in tRNA(Phe) + S-adenosyl-L-homocysteine + H(+). Its function is as follows. S-adenosyl-L-methionine-dependent methyltransferase that acts as a component of the wyosine derivatives biosynthesis pathway. Probably methylates N-4 position of wybutosine-86 to produce wybutosine-72. The sequence is that of tRNA(Phe) 7-((3-amino-3-carboxypropyl)-4-demethylwyosine(37)-N(4))-methyltransferase 1 from Thermococcus kodakarensis (strain ATCC BAA-918 / JCM 12380 / KOD1) (Pyrococcus kodakaraensis (strain KOD1)).